Here is a 175-residue protein sequence, read N- to C-terminus: Translation initiation factor IF-3 (175 aa).

Belongs to the IF-3 family. As to quaternary structure, monomer.

It localises to the cytoplasm. Its function is as follows. IF-3 binds to the 30S ribosomal subunit and shifts the equilibrium between 70S ribosomes and their 50S and 30S subunits in favor of the free subunits, thus enhancing the availability of 30S subunits on which protein synthesis initiation begins. This is Translation initiation factor IF-3 from Staphylococcus saprophyticus subsp. saprophyticus (strain ATCC 15305 / DSM 20229 / NCIMB 8711 / NCTC 7292 / S-41).